The following is a 1347-amino-acid chain: Protocadherin-11 X-linked (1347 aa).

Residues 1–23 (MDLLSGTYIFAVLLACVVFHSGA) form the signal peptide. Residues 24–812 (QEKNYTIREE…VSSPTSDYVK (789 aa)) lie on the Extracellular side of the membrane. Cadherin domains follow at residues 26–139 (KNYT…APLF), 140–249 (PATV…HPVF), 250–355 (KETE…VPSI), 362–466 (NPVN…APVF), 467–570 (TQSF…SPVF), 571–673 (THNE…KPVF), and 677–795 (PSNY…APVT). N-linked (GlcNAc...) asparagine glycans are attached at residues Asn27, Asn48, and Asn54. A glycan (N-linked (GlcNAc...) asparagine) is linked at Asn344. The N-linked (GlcNAc...) asparagine glycan is linked to Asn553. Asn773 carries N-linked (GlcNAc...) asparagine glycosylation. Residues 813-833 (ILVAAVAGTITVVVVIFITAV) form a helical membrane-spanning segment. Residues 834-1347 (VRCRQAPHLK…DSPVMEEHPL (514 aa)) are Cytoplasmic-facing. 3 disordered regions span residues 1057–1091 (LPEG…GYPQ), 1097–1116 (RATP…ESTF), and 1325–1347 (TFTP…EHPL).

The protein localises to the cell membrane. Functionally, potential calcium-dependent cell-adhesion protein. The sequence is that of Protocadherin-11 X-linked (PCDH11X) from Pan paniscus (Pygmy chimpanzee).